The chain runs to 99 residues: Transmembrane protein 14A (99 aa).

Transmembrane regions (helical) follow at residues 1-21 (MDLI…LGYK), 24-44 (GGVL…YGAY), and 79-99 (PAGL…LLLL).

This sequence belongs to the TMEM14 family.

The protein localises to the mitochondrion membrane. Its subcellular location is the endoplasmic reticulum membrane. In terms of biological role, inhibits apoptosis via negative regulation of the mitochondrial outer membrane permeabilization involved in apoptotic signaling pathway. In Bos taurus (Bovine), this protein is Transmembrane protein 14A (TMEM14A).